Consider the following 382-residue polypeptide: Adaptive-response sensory kinase SasA (382 aa).

One can recognise a Histidine kinase domain in the interval 160–382 (MLAHDLRSPL…CFHFTLPVYR (223 aa)). H163 carries the post-translational modification Phosphohistidine; by autocatalysis.

Homooligomerizes. Interacts with KaiC. Participates in the KaiABC clock complex, whose core is composed of a KaiC homohexamer, 6 KaiB and up to 6 KaiA dimers. SasA and KaiB(fs) compete to bind to KaiC.

The catalysed reaction is ATP + protein L-histidine = ADP + protein N-phospho-L-histidine.. In terms of biological role, member of the two-component regulatory system SasA/RpaA involved in genome-wide circadian gene expression. One of several clock output pathways. Participates in the Kai clock protein complex, the main circadian regulator in cyanobacteria, via its interaction with KaiC. KaiC enhances the autophosphorylation activity of SasA, which then transfers its phosphate group to RpaA to activate it. In addition to its output function, recruits fold-shifted KaiB (KaiB(fs)) to KaiC to cooperatively form the KaiB(6):KaiC(6) complex (independent of SasA kinase activity). Required for robustness of the circadian rhythm of gene expression and is involved in clock output, also required for adaptation to light/dark cycles. The protein is Adaptive-response sensory kinase SasA of Crocosphaera subtropica (strain ATCC 51142 / BH68) (Cyanothece sp. (strain ATCC 51142)).